Here is a 485-residue protein sequence, read N- to C-terminus: UDP-N-acetylmuramate--L-alanine ligase (485 aa).

120-126 (GSHGKTT) contacts ATP.

This sequence belongs to the MurCDEF family.

Its subcellular location is the cytoplasm. The catalysed reaction is UDP-N-acetyl-alpha-D-muramate + L-alanine + ATP = UDP-N-acetyl-alpha-D-muramoyl-L-alanine + ADP + phosphate + H(+). The protein operates within cell wall biogenesis; peptidoglycan biosynthesis. Functionally, cell wall formation. The chain is UDP-N-acetylmuramate--L-alanine ligase from Rickettsia massiliae (strain Mtu5).